A 333-amino-acid polypeptide reads, in one-letter code: Ketol-acid reductoisomerase (NADP(+)) (333 aa).

Residues 1-171 (MSNHTQPKIA…GGARANIIKT (171 aa)) form the KARI N-terminal Rossmann domain. NADP(+)-binding positions include 14 to 17 (YGSQ), Arg37, Thr42, and 72 to 75 (DMVQ). The active site involves His97. Gly123 serves as a coordination point for NADP(+). Positions 172–317 (TFKEETETDL…KKLRAKMVWL (146 aa)) constitute a KARI C-terminal knotted domain. Mg(2+) contacts are provided by Asp180, Glu184, Glu216, and Glu220. Residue Ser241 coordinates substrate.

This sequence belongs to the ketol-acid reductoisomerase family. It depends on Mg(2+) as a cofactor.

The enzyme catalyses (2R)-2,3-dihydroxy-3-methylbutanoate + NADP(+) = (2S)-2-acetolactate + NADPH + H(+). It carries out the reaction (2R,3R)-2,3-dihydroxy-3-methylpentanoate + NADP(+) = (S)-2-ethyl-2-hydroxy-3-oxobutanoate + NADPH + H(+). It participates in amino-acid biosynthesis; L-isoleucine biosynthesis; L-isoleucine from 2-oxobutanoate: step 2/4. It functions in the pathway amino-acid biosynthesis; L-valine biosynthesis; L-valine from pyruvate: step 2/4. In terms of biological role, involved in the biosynthesis of branched-chain amino acids (BCAA). Catalyzes an alkyl-migration followed by a ketol-acid reduction of (S)-2-acetolactate (S2AL) to yield (R)-2,3-dihydroxy-isovalerate. In the isomerase reaction, S2AL is rearranged via a Mg-dependent methyl migration to produce 3-hydroxy-3-methyl-2-ketobutyrate (HMKB). In the reductase reaction, this 2-ketoacid undergoes a metal-dependent reduction by NADPH to yield (R)-2,3-dihydroxy-isovalerate. This Xanthomonas axonopodis pv. citri (strain 306) protein is Ketol-acid reductoisomerase (NADP(+)).